The chain runs to 107 residues: NADH-quinone oxidoreductase subunit K (107 aa).

The next 3 helical transmembrane spans lie at 11 to 31, 36 to 56, and 67 to 87; these read LTHYLVLAALLFVMGMAGVLL, IVLLMSIELMLNSVNLTFVAF, and IMVFFVMTIAAAEAAVGLALA.

Belongs to the complex I subunit 4L family. In terms of assembly, NDH-1 is composed of 14 different subunits. Subunits NuoA, H, J, K, L, M, N constitute the membrane sector of the complex.

It is found in the cell inner membrane. It carries out the reaction a quinone + NADH + 5 H(+)(in) = a quinol + NAD(+) + 4 H(+)(out). In terms of biological role, NDH-1 shuttles electrons from NADH, via FMN and iron-sulfur (Fe-S) centers, to quinones in the respiratory chain. The immediate electron acceptor for the enzyme in this species is believed to be ubiquinone. Couples the redox reaction to proton translocation (for every two electrons transferred, four hydrogen ions are translocated across the cytoplasmic membrane), and thus conserves the redox energy in a proton gradient. The protein is NADH-quinone oxidoreductase subunit K of Bdellovibrio bacteriovorus (strain ATCC 15356 / DSM 50701 / NCIMB 9529 / HD100).